We begin with the raw amino-acid sequence, 153 residues long: Two-component response regulator ARR17 (153 aa).

Residues 21-149 (HVLAVDDNLI…DVEKLKCHLL (129 aa)) enclose the Response regulatory domain. 4-aspartylphosphate is present on D82.

Belongs to the ARR family. Type-A subfamily. Two-component system major event consists of a His-to-Asp phosphorelay between a sensor histidine kinase (HK) and a response regulator (RR). In plants, the His-to-Asp phosphorelay involves an additional intermediate named Histidine-containing phosphotransfer protein (HPt). This multistep phosphorelay consists of a His-Asp-His-Asp sequential transfer of a phosphate group between first a His and an Asp of the HK protein, followed by the transfer to a conserved His of the HPt protein and finally the transfer to an Asp in the receiver domain of the RR protein.

It is found in the nucleus. Functionally, functions as a response regulator involved in His-to-Asp phosphorelay signal transduction system. Phosphorylation of the Asp residue in the receiver domain activates the ability of the protein to promote the transcription of target genes. Type-A response regulators seem to act as negative regulators of the cytokinin signaling. This chain is Two-component response regulator ARR17 (ARR17), found in Arabidopsis thaliana (Mouse-ear cress).